The primary structure comprises 252 residues: Trans-aconitate 2-methyltransferase (252 aa).

Belongs to the methyltransferase superfamily. Tam family.

The protein localises to the cytoplasm. It carries out the reaction trans-aconitate + S-adenosyl-L-methionine = (E)-3-(methoxycarbonyl)pent-2-enedioate + S-adenosyl-L-homocysteine. Functionally, catalyzes the S-adenosylmethionine monomethyl esterification of trans-aconitate. The sequence is that of Trans-aconitate 2-methyltransferase from Escherichia coli (strain 55989 / EAEC).